We begin with the raw amino-acid sequence, 387 residues long: Gibberellic acid methyltransferase 2 (387 aa).

Residue Tyr33 participates in S-adenosyl-L-homocysteine binding. Gln40 is a binding site for gibberellin A4. Residues Cys74, Asn79, Asp113, Leu114, Ser146, and Phe147 each coordinate S-adenosyl-L-homocysteine. Residues His167 and Trp168 each contribute to the gibberellin A4 site. Mg(2+) is bound by residues Asn185, Arg275, Asp276, Phe278, and Asn279.

This sequence belongs to the methyltransferase superfamily. Type-7 methyltransferase family. SABATH subfamily. Mg(2+) serves as cofactor. In terms of tissue distribution, expressed in siliques and germinating seeds. Not detected in leaves, stems, flowers and roots.

The catalysed reaction is gibberellin A4 + S-adenosyl-L-methionine = O-methyl gibberellin A4 + S-adenosyl-L-homocysteine. Down-regulated by Zn(2+), Cu(2+) and Fe(3+). No effect of K(+), NH(4+), Na(+), Ca(2+), Mg(2+), Mn(2+) and Fe(2+). Functionally, methylates the carboxyl group of several gibberellins (GAs). Substrate preference is GA4 &gt; GA34 &gt; GA9 &gt; GA3 &gt; GA1 &gt; GA51 &gt; GA20. No activity with diterpenes abietic acid and ent-kaurenoic acid. The chain is Gibberellic acid methyltransferase 2 (GAMT2) from Arabidopsis thaliana (Mouse-ear cress).